A 118-amino-acid chain; its full sequence is DNA polymerase epsilon subunit 4 (118 aa).

Composition is skewed to low complexity over residues 1-11 (MAAAAAAGSGT) and 19-35 (GGEA…SAPG). The segment at 1–37 (MAAAAAAGSGTPREEEAPGGEAAASQAQAPTSAPGGV) is disordered. The residue at position 2 (alanine 2) is an N-acetylalanine. Threonine 11 bears the Phosphothreonine mark. Residue serine 25 is modified to Phosphoserine.

As to quaternary structure, component of the DNA polymerase epsilon complex consisting of four subunits: the catalytic subunit POLE and the accessory subunits POLE2, POLE3 and POLE4. Interaction with POLE3 is a prerequisite for further binding with POLE and POLE2.

The protein resides in the nucleus. Accessory component of the DNA polymerase epsilon complex. Participates in DNA repair and in chromosomal DNA replication. This Mus musculus (Mouse) protein is DNA polymerase epsilon subunit 4 (Pole4).